The primary structure comprises 72 residues: DNA-directed RNA polymerase subunit omega (72 aa).

This sequence belongs to the RNA polymerase subunit omega family. The RNAP catalytic core consists of 2 alpha, 1 beta, 1 beta' and 1 omega subunit. When a sigma factor is associated with the core the holoenzyme is formed, which can initiate transcription.

It catalyses the reaction RNA(n) + a ribonucleoside 5'-triphosphate = RNA(n+1) + diphosphate. Functionally, promotes RNA polymerase assembly. Latches the N- and C-terminal regions of the beta' subunit thereby facilitating its interaction with the beta and alpha subunits. The protein is DNA-directed RNA polymerase subunit omega of Francisella tularensis subsp. tularensis (strain FSC 198).